The sequence spans 179 residues: Tegument protein UL55 homolog (179 aa).

Belongs to the alphaherpesvirinae HHV-1 UL55 family.

The protein localises to the virion tegument. Its subcellular location is the host nucleus matrix. This is Tegument protein UL55 homolog from Homo sapiens (Human).